Consider the following 636-residue polypeptide: Threonine--tRNA ligase (636 aa).

The region spanning methionine 1–threonine 63 is the TGS domain. Positions aspartate 243 to proline 534 are catalytic. Zn(2+) is bound by residues cysteine 335, histidine 386, and histidine 511.

This sequence belongs to the class-II aminoacyl-tRNA synthetase family. In terms of assembly, homodimer. Requires Zn(2+) as cofactor.

Its subcellular location is the cytoplasm. It catalyses the reaction tRNA(Thr) + L-threonine + ATP = L-threonyl-tRNA(Thr) + AMP + diphosphate + H(+). Functionally, catalyzes the attachment of threonine to tRNA(Thr) in a two-step reaction: L-threonine is first activated by ATP to form Thr-AMP and then transferred to the acceptor end of tRNA(Thr). Also edits incorrectly charged L-seryl-tRNA(Thr). The protein is Threonine--tRNA ligase of Geobacter sp. (strain M21).